Reading from the N-terminus, the 161-residue chain is Chaperone protein dnaJ 11, chloroplastic (161 aa).

Over residues 1–18 the composition is skewed to low complexity; the sequence is MLSSSPTSFTHPFLSSSP. The interval 1–31 is disordered; the sequence is MLSSSPTSFTHPFLSSSPPLSPISPPSRTAR. Residues 1-36 constitute a chloroplast transit peptide; the sequence is MLSSSPTSFTHPFLSSSPPLSPISPPSRTARISPPL. The region spanning 65–133 is the J domain; that stretch reads SLYDVLEVPL…EKRSVYDRRM (69 aa).

This sequence belongs to the DnaJ family. C/III subfamily. Expressed in roots, stems, leaves, flowers and developing siliques.

Its subcellular location is the plastid. The protein localises to the chloroplast stroma. Plays a continuous role in plant development probably in the structural organization of compartments. The protein is Chaperone protein dnaJ 11, chloroplastic (ATJ11) of Arabidopsis thaliana (Mouse-ear cress).